The chain runs to 244 residues: Tetraspanin-7 (244 aa).

The Cytoplasmic portion of the chain corresponds to 1–11 (METKPVITCLK). Residues 12 to 35 (TLLIIYSFVFWITGVILLAVGVWG) traverse the membrane as a helical segment. Residues 36 to 51 (KLTLGTYISLIAENST) are Extracellular-facing. An N-linked (GlcNAc...) asparagine glycan is attached at asparagine 49. The helical transmembrane segment at 52 to 70 (NAPYVLIGTGTTIVVFGLF) threads the bilayer. The Cytoplasmic portion of the chain corresponds to 71–81 (GCFATCRGSPW). Residues 82 to 107 (MLKLYAMFLSLVFLAELVAGISGFVF) form a helical membrane-spanning segment. Residues 108-208 (RHEIKDTFLR…LVTSFMETNM (101 aa)) lie on the Extracellular side of the membrane. N-linked (GlcNAc...) asparagine glycans are attached at residues asparagine 150, asparagine 153, asparagine 172, and asparagine 183. A helical transmembrane segment spans residues 209-229 (GIIAGVAFGIAFSQLIGMLLA). Over 230–244 (CCLSRFITANQYEMV) the chain is Cytoplasmic.

It belongs to the tetraspanin (TM4SF) family.

The protein resides in the membrane. Its function is as follows. May be involved in cell proliferation and cell motility. In Pan troglodytes (Chimpanzee), this protein is Tetraspanin-7 (TSPAN7).